Consider the following 283-residue polypeptide: Pantothenate synthetase (283 aa).

Residue 30–37 coordinates ATP; it reads MGNLHAGH. His-37 functions as the Proton donor in the catalytic mechanism. Position 61 (Gln-61) interacts with (R)-pantoate. Gln-61 contacts beta-alanine. ATP is bound at residue 149-152; the sequence is GRKD. A (R)-pantoate-binding site is contributed by Gln-155. ATP is bound at residue 186–189; it reads LSSR.

It belongs to the pantothenate synthetase family. In terms of assembly, homodimer.

It is found in the cytoplasm. The catalysed reaction is (R)-pantoate + beta-alanine + ATP = (R)-pantothenate + AMP + diphosphate + H(+). The protein operates within cofactor biosynthesis; (R)-pantothenate biosynthesis; (R)-pantothenate from (R)-pantoate and beta-alanine: step 1/1. Its function is as follows. Catalyzes the condensation of pantoate with beta-alanine in an ATP-dependent reaction via a pantoyl-adenylate intermediate. In Chromohalobacter salexigens (strain ATCC BAA-138 / DSM 3043 / CIP 106854 / NCIMB 13768 / 1H11), this protein is Pantothenate synthetase.